Reading from the N-terminus, the 189-residue chain is MVVGLLGGSFDPPHPGHVHITREALKRFGLDRVWWLVSPGNPLKPRPPAPLARRLAEARRLMRHPRVAVTGLEAEIGTRFTAETLAVLQRRYPGVRFVWLMGADNLAQFHRWERWRAIMESVPVGVLARPGAGLRARTSPAARRYASALLPEAEAARLGRSAAPAWCFVNLPMMDLSSTEIRATGRWRG.

Belongs to the NadD family.

The catalysed reaction is nicotinate beta-D-ribonucleotide + ATP + H(+) = deamido-NAD(+) + diphosphate. Its pathway is cofactor biosynthesis; NAD(+) biosynthesis; deamido-NAD(+) from nicotinate D-ribonucleotide: step 1/1. Catalyzes the reversible adenylation of nicotinate mononucleotide (NaMN) to nicotinic acid adenine dinucleotide (NaAD). In Cereibacter sphaeroides (strain ATCC 17023 / DSM 158 / JCM 6121 / CCUG 31486 / LMG 2827 / NBRC 12203 / NCIMB 8253 / ATH 2.4.1.) (Rhodobacter sphaeroides), this protein is Probable nicotinate-nucleotide adenylyltransferase.